An 841-amino-acid chain; its full sequence is Translation initiation factor IF-2 (841 aa).

The tract at residues 87–254 is disordered; it reads RKKKVFVQRS…KRNAHGFQSP (168 aa). Over residues 96 to 135 the composition is skewed to basic and acidic residues; the sequence is SPEEIEAERKREMDERRAVENAARQKAEEEAKRRAEEDAR. Residues 136-175 are compositionally biased toward low complexity; the sequence is SQPAASQSAPAAAEPVAAAEPVREAAPAAAPAPASAAPSA. Basic and acidic residues-rich tracts occupy residues 176 to 217 and 225 to 234; these read DARK…EKAP and TTDEESDSFR. Residues 235–248 are compositionally biased toward basic residues; it reads RGGRGKGKLKKRNA. The tr-type G domain maps to 341-510; the sequence is SRAPVVTVMG…LLQAEVLELK (170 aa). The interval 350-357 is G1; sequence GHVDHGKT. GTP is bound at residue 350–357; that stretch reads GHVDHGKT. The G2 stretch occupies residues 375–379; the sequence is GITQH. A G3 region spans residues 396-399; sequence DTPG. Residues 396–400 and 450–453 contribute to the GTP site; these read DTPGH and NKID. Residues 450 to 453 form a G4 region; it reads NKID. Residues 486 to 488 form a G5 region; sequence SAK.

This sequence belongs to the TRAFAC class translation factor GTPase superfamily. Classic translation factor GTPase family. IF-2 subfamily.

It localises to the cytoplasm. Its function is as follows. One of the essential components for the initiation of protein synthesis. Protects formylmethionyl-tRNA from spontaneous hydrolysis and promotes its binding to the 30S ribosomal subunits. Also involved in the hydrolysis of GTP during the formation of the 70S ribosomal complex. The chain is Translation initiation factor IF-2 from Pseudomonas syringae pv. syringae (strain B728a).